The chain runs to 284 residues: Tropomyosin Tod p 1.0102 (284 aa).

Residues 15–273 (KEVATDKAEQ…KERYKSISDE (259 aa)) are a coiled coil. The segment at 103 to 136 (EERLTSAQSKLEDASKAADESERGRKVLENRSQG) is disordered.

This sequence belongs to the tropomyosin family. As to quaternary structure, homodimer. Post-translationally, the N-terminus is blocked. Expressed in mantle muscle (at protein level).

Functionally, tropomyosin, in association with the troponin complex, plays a central role in the calcium dependent regulation of muscle contraction. The polypeptide is Tropomyosin Tod p 1.0102 (Todarodes pacificus (Japanese flying squid)).